Consider the following 378-residue polypeptide: UPF0754 membrane protein BCG9842_B4423 (378 aa).

A helical transmembrane segment spans residues 357-377 (YLGALLGGIIGLVQGLLLLFL).

It belongs to the UPF0754 family.

The protein localises to the cell membrane. This Bacillus cereus (strain G9842) protein is UPF0754 membrane protein BCG9842_B4423.